Here is a 461-residue protein sequence, read N- to C-terminus: Decaprenylphosphoryl-beta-D-ribose oxidase (461 aa).

Residues 19-194 enclose the FAD-binding PCMH-type domain; it reads TAPSVANVLR…MRATIEMTPT (176 aa). Residues 53–63, glycine 117, 122–125, 129–132, isoleucine 184, and tyrosine 415 each bind FAD; these read ARGLGRSYGDN, TVGG, and CDIH.

It belongs to the DprE1 family. As to quaternary structure, monomer. Although forming apparent dimer in crystals, DprE1 does not dimerize appreciably in solution. Interacts with DprE2 to form an epimerase complex.

Its subcellular location is the periplasm. The catalysed reaction is trans,octa-cis-decaprenylphospho-beta-D-ribofuranose + FAD + H(+) = trans,octa-cis-decaprenylphospho-beta-D-erythro-pentofuranosid-2-ulose + FADH2. The protein operates within cell wall biogenesis; cell wall polysaccharide biosynthesis. Is inhibited by 8-nitro-benzothiazinones (BTZs) such as BTZ043 and PBTZ169; BTZs are a new class of antimycobacterial agents that kill M.tuberculosis in vitro, ex vivo, and in mouse models of tuberculosis. Is also inhibited by dinitrobenzamide derivatives (DNBs), which thus block formation of both cell-wall lipoarabinomannan and arabinogalactan via inhibition of decaprenyl-phospho-arabinose (DPA) synthesis; DNBs show high activity against intracellular growth of M.tuberculosis inside macrophages, including extensively drug resistant (XDR) strains. BTZs and DNBs are suicide inhibitors that act via covalent modification of DprE1; the essential nitro group of these compounds is reduced by DprE1 to a nitroso group, which then specifically reacts with Cys-387 of DprE1 to form an irreversible semimercaptal adduct. Many other compounds with diverse scaffolds were found to act as either covalent (e.g. nitroquinoxalines, nitroimidazoles) or non-covalent (e.g. the benzothiazole derivative TCA1, the 2-carboxyquinoxaline Ty38C, 8-pyrrole-benzothiazinones, 1,4-azaindoles, pyrazolopyridones, 4-aminoquinolone piperidine amides) DprE1 inhibitors. Its function is as follows. Component of the DprE1-DprE2 complex that catalyzes the 2-step epimerization of decaprenyl-phospho-ribose (DPR) to decaprenyl-phospho-arabinose (DPA), a key precursor that serves as the arabinose donor required for the synthesis of cell-wall arabinans. DprE1 catalyzes the first step of epimerization, namely FAD-dependent oxidation of the C2' hydroxyl of DPR to yield the keto intermediate decaprenyl-phospho-2'-keto-D-arabinose (DPX). The intermediate DPX is then transferred to DprE2 subunit of the epimerase complex, most probably through a 'substrate channel' at the interface of DprE1-DprE2 complex. Can also use farnesyl-phosphoryl-beta-D-ribofuranose (FPR) as substrate in vitro. Functionally, dprE1 is a highly vulnerable and fully validated tuberculosis drug target. This is Decaprenylphosphoryl-beta-D-ribose oxidase from Mycobacterium tuberculosis (strain CDC 1551 / Oshkosh).